The primary structure comprises 749 residues: Protein lin-54 homolog (749 aa).

Lys-139 is covalently cross-linked (Glycyl lysine isopeptide (Lys-Gly) (interchain with G-Cter in SUMO2)). Residues Lys-244 and Lys-249 each carry the N6-acetyllysine modification. Phosphoserine occurs at positions 264, 282, 310, and 314. Residue Lys-357 forms a Glycyl lysine isopeptide (Lys-Gly) (interchain with G-Cter in SUMO2) linkage. The 114-residue stretch at 521–634 folds into the CRC domain; it reads PRKPCNCTKS…KCIGCKNFEE (114 aa). The interval 523 to 536 is DNA-binding; sequence KPCNCTKSLCLKLY. Residues Cys-525, Cys-527, Cys-532, Cys-537, Cys-539, Cys-546, Cys-549, Cys-551, and Cys-554 each contribute to the Zn(2+) site. Residues 583 to 596 form a linker region; that stretch reads IGKGKEGESDRRHS. Positions 599, 601, 606, 611, 613, 620, 624, 626, and 629 each coordinate Zn(2+). Residues 599 to 612 are DNA-binding; the sequence is CNCKRSGCLKNYCE. The residue at position 635 (Ser-635) is a Phosphoserine. Residues Lys-639, Lys-659, and Lys-661 each participate in a glycyl lysine isopeptide (Lys-Gly) (interchain with G-Cter in SUMO2) cross-link.

It belongs to the lin-54 family. Component of the DREAM complex (also named LINC complex) at least composed of E2F4, E2F5, LIN9, LIN37, LIN52, LIN54, MYBL1, MYBL2, RBL1, RBL2, RBBP4, RBL2, TFDP1 and TFDP2. The complex exists in quiescent cells where it represses cell cycle-dependent genes. It dissociates in S phase when LIN9, LIN37, LIN52 and LIN54 form a subcomplex that binds to MYBL2.

It localises to the nucleus. In terms of biological role, component of the DREAM complex, a multiprotein complex that can both act as a transcription activator or repressor depending on the context. In G0 phase, the complex binds to more than 800 promoters and is required for repression of E2F target genes. In S phase, the complex selectively binds to the promoters of G2/M genes whose products are required for mitosis and participates in their cell cycle dependent activation. In the complex, acts as a DNA-binding protein that binds the promoter of CDK1 in a sequence-specific manner. Specifically recognizes the consensus motif 5'-TTYRAA-3' in target DNA. The chain is Protein lin-54 homolog (Lin54) from Mus musculus (Mouse).